We begin with the raw amino-acid sequence, 471 residues long: Tripartite motif-containing protein 60 (471 aa).

Residues 16 to 57 (CPICLEYLKDPVTINCGHNFCRSCLSVSWKDLDDTFPCPVCR) form an RING-type zinc finger. The B box-type zinc-finger motif lies at 92–133 (KENAMCEKHNQFLTLFCVKDLEILCTQCSFSTKHQKHYICPI). Positions 97, 100, 119, and 125 each coordinate Zn(2+). The stretch at 171-223 (ELKKKVEYKREEINSEFEQIRLFLQNEQEMILRQIQDEEMNILAKLNENLVEL) forms a coiled coil. In terms of domain architecture, B30.2/SPRY spans 277 to 470 (FSLPPQYSGL…LKICSVSDSE (194 aa)).

It belongs to the TRIM/RBCC family.

In terms of biological role, E3 SUMO-protein ligase that mediates SUMOylation of TAB2 leading to inhibition of NF-kappa-B and MAPK pathways by suppressing the TRAF6/TAB2/TAK1 complex. The protein is Tripartite motif-containing protein 60 (TRIM60) of Homo sapiens (Human).